The chain runs to 242 residues: Dickkopf-like protein 1 (242 aa).

The first 30 residues, 1–30, serve as a signal peptide directing secretion; it reads MGEASPPAPARRHLLVLLLLLSTLVIPSAA. N-linked (GlcNAc...) asparagine glycosylation is found at Asn-97 and Asn-112.

As to quaternary structure, interacts with SLXL1; Co-localize in seminiferous tubules. Interacts with SLY. Post-translationally, N-glycosylated during spermatogenesis. Not N-glycosylated in mature sperm. More highly expressed in adult testis than in fetal testis. Exclusively expressed in the testis (at protein level). Intense expression in stages II, III and IV of spermatogenesis, whereas expression is lower in stage I.

It is found in the secreted. Its subcellular location is the cytoplasmic vesicle. It localises to the secretory vesicle. The protein resides in the acrosome. Its function is as follows. Involved in fertilization by facilitating sperm penetration of the zona pellucida. May promote spermatocyte apoptosis, thereby limiting sperm production. In adults, may reduce testosterone synthesis in Leydig cells. Is not essential either for development or fertility. This chain is Dickkopf-like protein 1, found in Homo sapiens (Human).